Reading from the N-terminus, the 169-residue chain is Large ribosomal subunit protein uL10 (169 aa).

The protein belongs to the universal ribosomal protein uL10 family. In terms of assembly, part of the ribosomal stalk of the 50S ribosomal subunit. The N-terminus interacts with L11 and the large rRNA to form the base of the stalk. The C-terminus forms an elongated spine to which L12 dimers bind in a sequential fashion forming a multimeric L10(L12)X complex.

Its function is as follows. Forms part of the ribosomal stalk, playing a central role in the interaction of the ribosome with GTP-bound translation factors. The sequence is that of Large ribosomal subunit protein uL10 from Staphylococcus saprophyticus subsp. saprophyticus (strain ATCC 15305 / DSM 20229 / NCIMB 8711 / NCTC 7292 / S-41).